Here is a 579-residue protein sequence, read N- to C-terminus: MGKGTDKLYITHSEWASEDAYSASAGAGVGKARRGGENAGFRRLPFNFCSLSLQPFSHPVCTPSGTIFDLTSILPWIKKHGTNPVDGSPLKSSDLIKLNIAKNESGEYVDPVTYKVLTDNTHIVALRNTGNVFAWDTVERLNIKGKLWRDLVTDEEFSRKDIITLQDPQNIESRNLSTFNYLKEGESALTEQQIREREDPSNNVNFNALGNAAKILKAKEAVAKARAERAQRAESGAASKGLTKPGMSATAASQKTVSHQAGKPIPYNAARHTTGLAAASFTSTGMTPHTSAELALLSDEEYMLKRGRVKQKGYARISTTLGDVNLELHTEYAPKAVWNFIKLAKKGYYKDVTFHRNIKGFMIQGGDPTGTGRGGESIWGKYFNDEFEGPLKHDSRGTLSMANKGKNTNSSQFFIAYRALPHLNNKHTIFGHVIDDPTPSSPTLNNMETHPVNPTTNRPTPDIRIKDVTIFVDPFEEFLKQKQADEAKGTTVTDDTKTSQEIDDDRITWTGKRVRGPGATEAGESSAGGVGKYLKAALANQANQGEDEIVEFVDEGPEPEPAKKKFKGGGGFGDFSSWD.

The region spanning 42–115 (RRLPFNFCSL…GEYVDPVTYK (74 aa)) is the U-box domain. The segment at 227–261 (AERAQRAESGAASKGLTKPGMSATAASQKTVSHQA) is disordered. The segment covering 250 to 259 (TAASQKTVSH) has biased composition (polar residues). Residues 311–470 (QKGYARISTT…PDIRIKDVTI (160 aa)) enclose the PPIase cyclophilin-type domain. A disordered region spans residues 555 to 579 (EGPEPEPAKKKFKGGGGFGDFSSWD).

It belongs to the cyclophilin-type PPIase family. PPIL2 subfamily.

It localises to the nucleus. The catalysed reaction is [protein]-peptidylproline (omega=180) = [protein]-peptidylproline (omega=0). It catalyses the reaction S-ubiquitinyl-[E2 ubiquitin-conjugating enzyme]-L-cysteine + [acceptor protein]-L-lysine = [E2 ubiquitin-conjugating enzyme]-L-cysteine + N(6)-ubiquitinyl-[acceptor protein]-L-lysine.. It participates in protein modification; protein ubiquitination. Functionally, may catalyze the cis-trans isomerization of proline imidic peptide bonds in oligopeptides thereby assisting the folding of proteins. May also function as a chaperone, playing a role in intracellular transport of proteins. May also have a protein ubiquitin ligase activity acting as an E3 ubiquitin protein ligase or as a ubiquitin-ubiquitin ligase promoting elongation of ubiquitin chains on proteins. This is Peptidyl-prolyl cis-trans isomerase-like 2 (cyp8) from Aspergillus fumigatus (strain ATCC MYA-4609 / CBS 101355 / FGSC A1100 / Af293) (Neosartorya fumigata).